The following is a 121-amino-acid chain: Large ribosomal subunit protein bL19 (121 aa).

It belongs to the bacterial ribosomal protein bL19 family.

In terms of biological role, this protein is located at the 30S-50S ribosomal subunit interface and may play a role in the structure and function of the aminoacyl-tRNA binding site. This Polaromonas sp. (strain JS666 / ATCC BAA-500) protein is Large ribosomal subunit protein bL19.